The chain runs to 558 residues: uncharacterized protein (558 aa).

Positions 338–354 (STSTSTSTSTSSSNDLN) are enriched in low complexity. The disordered stretch occupies residues 338–380 (STSTSTSTSTSSSNDLNLDSDSDDSDSDDSDSDSDSDSDSEID). Residues 355 to 380 (LDSDSDDSDSDDSDSDSDSDSDSEID) are compositionally biased toward acidic residues.

It localises to the plastid. This is an uncharacterized protein from Euglena longa (Euglenophycean alga).